A 267-amino-acid chain; its full sequence is Cilia- and flagella-associated protein 300 (267 aa).

This sequence belongs to the CFAP300 family. In terms of assembly, interacts with DNAAF2.

Its subcellular location is the cytoplasm. The protein localises to the cytoskeleton. It is found in the cilium axoneme. Cilium- and flagellum-specific protein that plays a role in axonemal structure organization and motility. May play a role in outer and inner dynein arm assembly. The polypeptide is Cilia- and flagella-associated protein 300 (Rattus norvegicus (Rat)).